A 144-amino-acid chain; its full sequence is MKIQIHNHTSFKIDSYQQLLIQLFSQIKENNQMHLVFVTKEKIKQLNTFFRKKNFVTDVLSFPNEFSFNPNLKDDSLGDVFICFEQAQLQAQKLLHSLEREIAFLVVHGFLHLKGYQHNNEEELEKMIHLQEKILKKINLERKK.

3 residues coordinate Zn(2+): His-108, His-112, and His-118.

It belongs to the endoribonuclease YbeY family. Zn(2+) serves as cofactor.

The protein resides in the cytoplasm. Single strand-specific metallo-endoribonuclease involved in late-stage 70S ribosome quality control and in maturation of the 3' terminus of the 16S rRNA. The protein is Endoribonuclease YbeY of Phytoplasma australiense.